The sequence spans 59 residues: Bdellastasin (59 aa).

Cystine bridges form between Cys-10-Cys-21, Cys-15-Cys-26, Cys-28-Cys-48, Cys-33-Cys-52, and Cys-37-Cys-54. The Antistasin-like domain maps to 28–54; sequence CSDLHCKVKCEHGFKKDDNGCEYACIC.

It localises to the secreted. In terms of biological role, strong inhibitor of mammalian trypsin, plasmin and acrosin. This chain is Bdellastasin, found in Hirudo medicinalis (Medicinal leech).